Here is a 300-residue protein sequence, read N- to C-terminus: tRNA dimethylallyltransferase 1 (300 aa).

13–20 (GPTGVGKT) lines the ATP pocket. Position 15 to 20 (15 to 20 (TGVGKT)) interacts with substrate. Positions 38-41 (DSRQ) are interaction with substrate tRNA.

It belongs to the IPP transferase family. In terms of assembly, monomer. Mg(2+) serves as cofactor.

It catalyses the reaction adenosine(37) in tRNA + dimethylallyl diphosphate = N(6)-dimethylallyladenosine(37) in tRNA + diphosphate. Catalyzes the transfer of a dimethylallyl group onto the adenine at position 37 in tRNAs that read codons beginning with uridine, leading to the formation of N6-(dimethylallyl)adenosine (i(6)A). In Porphyromonas gingivalis (strain ATCC BAA-308 / W83), this protein is tRNA dimethylallyltransferase 1.